We begin with the raw amino-acid sequence, 212 residues long: Methylthioribulose-1-phosphate dehydratase (212 aa).

Residues His97 and His99 each coordinate Zn(2+).

This sequence belongs to the aldolase class II family. MtnB subfamily. In terms of assembly, homotetramer. It depends on Zn(2+) as a cofactor.

It carries out the reaction 5-(methylsulfanyl)-D-ribulose 1-phosphate = 5-methylsulfanyl-2,3-dioxopentyl phosphate + H2O. It functions in the pathway amino-acid biosynthesis; L-methionine biosynthesis via salvage pathway; L-methionine from S-methyl-5-thio-alpha-D-ribose 1-phosphate: step 2/6. Functionally, catalyzes the dehydration of methylthioribulose-1-phosphate (MTRu-1-P) into 2,3-diketo-5-methylthiopentyl-1-phosphate (DK-MTP-1-P). The polypeptide is Methylthioribulose-1-phosphate dehydratase (Bacillus cereus (strain ATCC 10987 / NRS 248)).